The chain runs to 34 residues: IPKNLTRAQWFTIQHIQPSPLQXNKAMNGVNXYT.

An N-linked (GlcNAc...) asparagine; partial glycan is attached at Asn4. The Proton acceptor role is filled by His15.

It belongs to the pancreatic ribonuclease family.

The protein localises to the lysosome. The enzyme catalyses an [RNA] containing cytidine + H2O = an [RNA]-3'-cytidine-3'-phosphate + a 5'-hydroxy-ribonucleotide-3'-[RNA].. It catalyses the reaction an [RNA] containing uridine + H2O = an [RNA]-3'-uridine-3'-phosphate + a 5'-hydroxy-ribonucleotide-3'-[RNA].. This Sus scrofa (Pig) protein is Ribonuclease PL1.